The sequence spans 299 residues: Plant-type L-asparaginase (299 aa).

Catalysis depends on threonine 169, which acts as the Nucleophile. Residues 197-200 (RVGD) and 220-223 (TGVG) each bind substrate.

It belongs to the Ntn-hydrolase family. Heterotetramer of two alpha and two beta chains arranged as a dimer of alpha/beta heterodimers. The uncleaved protein forms homodimers. Post-translationally, autocleaved. Generates the alpha and beta subunits. The N-terminal residue of the beta subunit is thought to be responsible for the nucleophile hydrolase activity.

The enzyme catalyses L-asparagine + H2O = L-aspartate + NH4(+). Its activity is regulated as follows. Divalent metal ions and EDTA do not have significant effect on enzyme activity, indicating that activity is metal-independent. Its function is as follows. Catalyzes the hydrolysis of L-asparagine into L-aspartate and ammonia. Also displays D-asparaginase activity, which is about 20% of the L-asparaginase activity. Does not exhibit glutaminase activity. The protein is Plant-type L-asparaginase of Pyrobaculum calidifontis (strain DSM 21063 / JCM 11548 / VA1).